The primary structure comprises 467 residues: MDANGIKLTPKDIVSKLDEYIVGQDDAKRKVAIALRNRYRRSLLDEETKQEIAPKNILMIGPTGVGKTEIARRMAKVVGAPFIKVEATKFTEVGYVGRDVESMVRDLVDVAVRLVKDQKKGLVKDEAVNKANEKLVKLLVPSMKKKASNNSNPLESLLGGAIPNFGNNDDEEEETPTEEIKTKRSEIKKQLLDGKLEEEKVRIKVEQDPGALGMLGTNQNQQMQDMMNQLMPKRKVEREVPVKTARKILADDFADELIDQETANQEALELAEQMGIIFIDEIDKVATNNANSGQDVSRQGVQRDILPILEGSMIQTKYGTVNTEHMLFIGAGAFHVSKPSDLIPELQGRFPIRVELESLTVDDFYRILTEPKLSLIKQYEALLQTEEVTVNFTKEAITRLAEMAYQVNQDTDNIGARRLHTILEKMLEDLSFEAPSMPNAVVDITPQYVDDKLKSISTNKDLSAFIL.

ATP is bound by residues Val-22 and 64–69; that span reads GVGKTE. Residues 146–185 form a disordered region; it reads KASNNSNPLESLLGGAIPNFGNNDDEEEETPTEEIKTKRS. A compositionally biased stretch (acidic residues) spans 168–177; sequence NDDEEEETPT. ATP-binding residues include Asp-280, Glu-345, and Arg-417.

It belongs to the ClpX chaperone family. HslU subfamily. A double ring-shaped homohexamer of HslV is capped on each side by a ring-shaped HslU homohexamer. The assembly of the HslU/HslV complex is dependent on binding of ATP.

Its subcellular location is the cytoplasm. In terms of biological role, ATPase subunit of a proteasome-like degradation complex; this subunit has chaperone activity. The binding of ATP and its subsequent hydrolysis by HslU are essential for unfolding of protein substrates subsequently hydrolyzed by HslV. HslU recognizes the N-terminal part of its protein substrates and unfolds these before they are guided to HslV for hydrolysis. The polypeptide is ATP-dependent protease ATPase subunit HslU (Staphylococcus haemolyticus (strain JCSC1435)).